Here is a 270-residue protein sequence, read N- to C-terminus: Tryptophan synthase alpha chain (270 aa).

Catalysis depends on proton acceptor residues glutamate 49 and aspartate 60.

Belongs to the TrpA family. Tetramer of two alpha and two beta chains.

The catalysed reaction is (1S,2R)-1-C-(indol-3-yl)glycerol 3-phosphate + L-serine = D-glyceraldehyde 3-phosphate + L-tryptophan + H2O. The protein operates within amino-acid biosynthesis; L-tryptophan biosynthesis; L-tryptophan from chorismate: step 5/5. Functionally, the alpha subunit is responsible for the aldol cleavage of indoleglycerol phosphate to indole and glyceraldehyde 3-phosphate. The sequence is that of Tryptophan synthase alpha chain from Buchnera aphidicola subsp. Melaphis rhois.